The sequence spans 216 residues: Holliday junction branch migration complex subunit RuvA (216 aa).

Residues 1–64 (MISFIKGVLI…EDAQQLYGFK (64 aa)) form a domain I region. Positions 65-143 (SKVDKKVFQE…KMANEIYAQT (79 aa)) are domain II. Residues 144 to 163 (SGTTTTSQDSQAQQAPTSVV) are flexible linker. The tract at residues 164-216 (LANSIFNESVDALLALGYKQKDAEKMARSAMGDATTAAEVIRKALQGSIKSKG) is domain III.

The protein belongs to the RuvA family. In terms of assembly, homotetramer. Forms an RuvA(8)-RuvB(12)-Holliday junction (HJ) complex. HJ DNA is sandwiched between 2 RuvA tetramers; dsDNA enters through RuvA and exits via RuvB. An RuvB hexamer assembles on each DNA strand where it exits the tetramer. Each RuvB hexamer is contacted by two RuvA subunits (via domain III) on 2 adjacent RuvB subunits; this complex drives branch migration. In the full resolvosome a probable DNA-RuvA(4)-RuvB(12)-RuvC(2) complex forms which resolves the HJ.

It localises to the cytoplasm. In terms of biological role, the RuvA-RuvB-RuvC complex processes Holliday junction (HJ) DNA during genetic recombination and DNA repair, while the RuvA-RuvB complex plays an important role in the rescue of blocked DNA replication forks via replication fork reversal (RFR). RuvA specifically binds to HJ cruciform DNA, conferring on it an open structure. The RuvB hexamer acts as an ATP-dependent pump, pulling dsDNA into and through the RuvAB complex. HJ branch migration allows RuvC to scan DNA until it finds its consensus sequence, where it cleaves and resolves the cruciform DNA. This is Holliday junction branch migration complex subunit RuvA from Francisella tularensis subsp. holarctica (strain FTNF002-00 / FTA).